Here is a 240-residue protein sequence, read N- to C-terminus: Small ribosomal subunit protein uS2 (240 aa).

This sequence belongs to the universal ribosomal protein uS2 family.

The chain is Small ribosomal subunit protein uS2 from Haemophilus influenzae (strain 86-028NP).